A 513-amino-acid polypeptide reads, in one-letter code: Maturase K (513 aa).

It belongs to the intron maturase 2 family. MatK subfamily.

It localises to the plastid. It is found in the chloroplast. Functionally, usually encoded in the trnK tRNA gene intron. Probably assists in splicing its own and other chloroplast group II introns. The polypeptide is Maturase K (Phragmites australis (Common reed)).